The chain runs to 346 residues: MSGNNSSLSYKDAGVDIDAGNALVERIKGSVKRTRRPEVMGGIGGFGALCELPTKYKQPVLVSGTDGVGTKLRLALDMNKHDTIGIDLVAMCVNDLIVQGAEPLFFLDYYATGKLDVDVAADVISGIAEGCIQAGCALIGGETAEMPGMYEGEDYDVAGFCVGVVEKEDIIDGTKVAVGDALIAVGSSGPHSNGYSLVRKILEVSGADKNEELAGRTIGEHLLEPTKIYIKSALKMIEQHDIHAISHITGGGFWENIPRVLPEGTKAVIDGKSWEWPVIFQWLQEKGNVATREMYRTFNCGVGLIVALPQDQAEAAVALLQQEGEKAWVIGAIAQAEAGEEQVEIN.

It belongs to the AIR synthase family.

It localises to the cytoplasm. The catalysed reaction is 2-formamido-N(1)-(5-O-phospho-beta-D-ribosyl)acetamidine + ATP = 5-amino-1-(5-phospho-beta-D-ribosyl)imidazole + ADP + phosphate + H(+). It functions in the pathway purine metabolism; IMP biosynthesis via de novo pathway; 5-amino-1-(5-phospho-D-ribosyl)imidazole from N(2)-formyl-N(1)-(5-phospho-D-ribosyl)glycinamide: step 2/2. The protein is Phosphoribosylformylglycinamidine cyclo-ligase of Vibrio vulnificus (strain YJ016).